Reading from the N-terminus, the 517-residue chain is Perilipin-1 (517 aa).

The residue at position 81 (S81) is a Phosphoserine. Residue T85 is modified to Phosphothreonine. Residues S126, S130, S132, S137, and S174 each carry the phosphoserine modification. Residues 197-217 (VESAPSSGRQKTQKAPKAKPS) are disordered. A phosphothreonine mark is found at T224, T299, and T301. The disordered stretch occupies residues 285–321 (HNLAASKDENHEDQTDTEGEETDEEEEEEESEAEENV). Residues 291–322 (KDENHEDQTDTEGEETDEEEEEEESEAEENVL) are required for interaction with CIDEC. The span at 299–319 (TDTEGEETDEEEEEEESEAEE) shows a compositional bias: acidic residues. Residues S315, S385, S387, P408, S411, S434, S436, S440, S460, S492, and S494 each carry the phosphoserine modification. The tract at residues 415-495 (PESEFQDIDN…KPARRVSDSF (81 aa)) is disordered. The segment covering 483-492 (PREKPARRVS) has biased composition (basic and acidic residues).

It belongs to the perilipin family. As to quaternary structure, interacts with ABHD5. Interacts with CIDEC. Interacts with AQP7. Post-translationally, major cAMP-dependent protein kinase substrate in adipocytes, also dephosphorylated by PP1. When phosphorylated, may be maximally sensitive to HSL. When unphosphorylated, may play a role in the inhibition of lipolysis, by acting as a barrier in lipid droplet. The N-terminus is blocked. Adipocytes.

The protein localises to the endoplasmic reticulum. Its subcellular location is the lipid droplet. Modulator of adipocyte lipid metabolism. Coats lipid storage droplets to protect them from breakdown by hormone-sensitive lipase (HSL). Its absence may result in leanness. Plays a role in unilocular lipid droplet formation by activating CIDEC. Their interaction promotes lipid droplet enlargement and directional net neutral lipid transfer. May modulate lipolysis and triglyceride levels. The sequence is that of Perilipin-1 (Plin1) from Rattus norvegicus (Rat).